The primary structure comprises 647 residues: DNA mismatch repair protein MutL (647 aa).

It belongs to the DNA mismatch repair MutL/HexB family.

Its function is as follows. This protein is involved in the repair of mismatches in DNA. It is required for dam-dependent methyl-directed DNA mismatch repair. May act as a 'molecular matchmaker', a protein that promotes the formation of a stable complex between two or more DNA-binding proteins in an ATP-dependent manner without itself being part of a final effector complex. The sequence is that of DNA mismatch repair protein MutL from Bacillus cereus (strain Q1).